The chain runs to 142 residues: Glia maturation factor beta (142 aa).

At S2 the chain carries N-acetylserine. Residues 4–139 form the ADF-H domain; that stretch reads SLVVCDVAED…TEEWLREKLG (136 aa).

The protein belongs to the actin-binding proteins ADF family. GMF subfamily. Phosphorylated; stimulated by phorbol ester.

Functionally, this protein causes differentiation of brain cells, stimulation of neural regeneration, and inhibition of proliferation of tumor cells. The sequence is that of Glia maturation factor beta (GMFB) from Homo sapiens (Human).